A 624-amino-acid polypeptide reads, in one-letter code: Heat shock factor protein 5 (624 aa).

A DNA-binding region spans residues 11–228 (NPNNFPAKLW…FHRSFRRDNL (218 aa)). 5 disordered regions span residues 52-77 (LSPP…SGVG), 112-138 (GAAG…HSPH), 186-214 (SASA…HGPV), 429-461 (CPSS…LEPL), and 572-605 (GPAN…DLHL). 2 stretches are compositionally biased toward gly residues: residues 58–77 (GAGG…SGVG) and 112–127 (GAAG…GPAG). 2 stretches are compositionally biased toward low complexity: residues 186–197 (SASASTSPLQHQ) and 442–457 (PNAN…QASQ). The residue at position 600 (Ser600) is a Phosphoserine.

It belongs to the HSF family. In terms of assembly, homooligomer. Highly expressed in testis particularly in spermatocytes (at protein level). Not expressed in fetal testis and ovary.

Its subcellular location is the nucleus. It is found in the chromosome. Its function is as follows. DNA-binding transcription factor that is essential for male fertility, spermatogenesis and meiotic prophase progression in spermatocytes under non-stress conditions. Positvely and negatively regulates gene expression to ensure progression of meiotic prophase beyond pachytene stage in spermatocytes. Plays a role in male germline meiotic sex chromosome remodeling and silencing through regulation of SMARCA4. The protein is Heat shock factor protein 5 (Hsf5) of Mus musculus (Mouse).